The sequence spans 1431 residues: Zinc finger protein 687b (1431 aa).

Disordered regions lie at residues 24-481 (KEAI…RPLK) and 504-538 (KGGA…TTAG). The span at 61–73 (SPSPSTDSQSDPS) shows a compositional bias: low complexity. A compositionally biased stretch (polar residues) spans 103–122 (GFVSSGGSVHMSQSRGQPNG). Composition is skewed to low complexity over residues 174–188 (MQLL…EMNL), 196–209 (APAN…AASP), and 217–248 (LLST…ASSP). Polar residues predominate over residues 249–267 (LATSLTEPFNGTPRLSSSA). Residues 311–324 (SQSPSIPPSTSISP) are compositionally biased toward low complexity. Positions 342–359 (RAQQNWLSTAAQTGNGKS) are enriched in polar residues. Residues 361 to 377 (PQEERNPEHVIEERDSP) show a composition bias toward basic and acidic residues. Residues 385 to 410 (PKSSMPTSAVTKRSCSPAAASSPSAA) are compositionally biased toward low complexity. The span at 438–449 (DGGKGDTDKIEV) shows a compositional bias: basic and acidic residues. A compositionally biased stretch (gly residues) spans 519 to 528 (QTGGRAGPVK). A C2H2-type 1; degenerate zinc finger spans residues 674–692 (YRCLECGDSFALERSLARH). Positions 754–816 (TTPIGMLSPS…GPQSPQALMP (63 aa)) are disordered. The span at 760-775 (LSPSLSSPPLTSSTTP) shows a compositional bias: low complexity. Residues 781-802 (APSTSSPLKDSPSPGTASTQPS) are compositionally biased toward polar residues. Residues 830–853 (FKCPECQAQFLSKAELVTHFQQIR) form a C2H2-type 2; degenerate zinc finger. 4 C2H2-type zinc fingers span residues 919–942 (YRCS…QTAH), 947–970 (HKCP…TSQH), 982–1004 (YKCV…FDTH), and 1013–1036 (FKCP…KTAH). Positions 1041–1120 (VKAETPPTTS…QVSSPESGNM (80 aa)) are disordered. Residues 1043-1057 (AETPPTTSSPVSAPA) are compositionally biased toward low complexity. Residues 1058–1075 (GNSTSKPKPATENNSDEL) show a composition bias toward polar residues. Positions 1080 to 1111 (GEEEEEGEDEEGEQEGEEREDEEEEENEEEEQ) are enriched in acidic residues. Residues 1122-1145 (WRCKECKKRFPEREDYIDHMKNEH) form a C2H2-type 7 zinc finger. Residues 1205–1227 (WHCSEGKRTFSSRLILEKHIRVR) form a C2H2-type 8; degenerate zinc finger. Residues 1225–1310 (RVRHGIRSRQ…EEEDGTFRCT (86 aa)) form a disordered region. 2 C2H2-type zinc fingers span residues 1307–1329 (FRCT…IPVH) and 1337–1360 (QQCL…FITH). A disordered region spans residues 1362 to 1392 (LRQGQHDRNASPGASPQYGSPSSPKAGEDGD). Polar residues predominate over residues 1373 to 1384 (PGASPQYGSPSS). Residues 1395–1425 (VSCRVCGRRFDKASDLNTHFRTHGMAFITAH) form a C2H2-type 11 zinc finger.

It belongs to the krueppel C2H2-type zinc-finger protein family. Widely expressed with highest levels in eye, spleen and ovary.

The protein localises to the nucleus. May be involved in transcriptional regulation. This Danio rerio (Zebrafish) protein is Zinc finger protein 687b (znf687b).